The chain runs to 173 residues: Large ribosomal subunit protein uL16 (173 aa).

It belongs to the universal ribosomal protein uL16 family.

The chain is Large ribosomal subunit protein uL16 from Methanococcus aeolicus (strain ATCC BAA-1280 / DSM 17508 / OCM 812 / Nankai-3).